The chain runs to 622 residues: Basal cell adhesion molecule (622 aa).

The signal sequence occupies residues Met-1–Ala-25. 2 consecutive Ig-like V-type domains span residues Glu-26–Arg-135 and Pro-140–Arg-250. The Extracellular segment spans residues Glu-26–Ala-541. 3 disulfide bridges follow: Cys-47/Cys-118, Cys-165/Cys-230, and Cys-284/Cys-330. Ig-like C2-type domains follow at residues Pro-267 to Gln-342, Pro-356 to Gln-435, and Pro-442 to Gly-532. N-linked (GlcNAc...) asparagine glycosylation is found at Asn-314, Asn-323, Asn-370, and Asn-377. Intrachain disulfides connect Cys-378–Cys-418 and Cys-467–Cys-516. The helical transmembrane segment at Gly-542 to Phe-562 threads the bilayer. Residues Tyr-563–Cys-622 lie on the Cytoplasmic side of the membrane. The tract at residues Cys-574–Cys-622 is disordered. Positions Arg-575–His-599 are enriched in basic and acidic residues. 4 positions are modified to phosphoserine: Ser-590, Ser-592, Ser-594, and Ser-615. Gly residues predominate over residues Leu-603–Cys-622.

In terms of assembly, homodimer. Interacts with ITGA4:ITGB1. Interacts with spectrins SPTA1 and SPTB1. In terms of processing, epinephrine-stimulated phosphorylation of Ser-615 by PKA enhances adhesion to laminin. Ser-615 can also be phosphorylated by AKT1.

It localises to the cell membrane. In terms of biological role, transmembrane glycoprotein that functions as both a receptor and an adhesion molecule playing a crucial role in cell adhesion, motility, migration and invasion. Extracellular domain enables binding to extracellular matrix proteins, such as laminin, integrin and other ligands while its intracellular domain interacts with cytoskeletal proteins like hemoglobin, facilitating cell signal transduction. Serves as a receptor for laminin alpha-5/LAMA5 to promote cell adhesion. Mechanistically, JAK2 induces BCAM phosphorylation and activates its adhesion to laminin by stimulating a Rap1/AKT signaling pathway in the absence of EPOR. The polypeptide is Basal cell adhesion molecule (Bcam) (Mus musculus (Mouse)).